The following is an 85-amino-acid chain: Toxin Cll7 (85 aa).

An N-terminal signal peptide occupies residues 1–19 (MNSLLMITACLVLFGTVWA). The 64-residue stretch at 20-83 (KEGYLVNTYT…TWPLPNKTCG (64 aa)) folds into the LCN-type CS-alpha/beta domain. Cystine bridges form between cysteine 31–cysteine 82, cysteine 35–cysteine 58, cysteine 44–cysteine 63, and cysteine 48–cysteine 65.

The protein belongs to the long (4 C-C) scorpion toxin superfamily. Sodium channel inhibitor family. Beta subfamily. As to expression, expressed by the venom gland.

It localises to the secreted. In terms of biological role, beta toxins bind voltage-independently at site-4 of sodium channels (Nav) and shift the voltage of activation toward more negative potentials thereby affecting sodium channel activation and promoting spontaneous and repetitive firing. The polypeptide is Toxin Cll7 (Centruroides limpidus (Mexican scorpion)).